Reading from the N-terminus, the 515-residue chain is Glucose-6-phosphate 1-dehydrogenase (515 aa).

Residue Ala2 is modified to N-acetylalanine. Ser8 bears the Phosphoserine mark. Thr10 is subject to Phosphothreonine. Residues 38–45 (GASGDLAK) and Arg72 contribute to the NADP(+) site. At Lys89 the chain carries N6-acetyllysine. 2 residues coordinate NADP(+): Tyr147 and Lys171. D-glucose 6-phosphate-binding positions include Lys171, 201-205 (HYLGK), Glu239, and Asp258. Position 171 is an N6-(2-hydroxyisobutyryl)lysine; alternate (Lys171). An N6-acetyllysine; alternate modification is found at Lys171. His263 functions as the Proton acceptor in the catalytic mechanism. Residue Arg357 coordinates NADP(+). Residues Lys360 and Arg365 each coordinate D-glucose 6-phosphate. NADP(+)-binding residues include Lys366, Arg370, and Arg393. Gln395 serves as a coordination point for D-glucose 6-phosphate. Residues 401 to 403 (YTK) and 421 to 423 (DLT) each bind NADP(+). At Lys403 the chain carries N6-acetyllysine. Lys432 is subject to N6-acetyllysine. An NADP(+)-binding site is contributed by Arg487. Position 497 is an N6-acetyllysine (Lys497). The NADP(+) site is built by Tyr503 and Trp509. Tyr503 bears the Phosphotyrosine mark.

This sequence belongs to the glucose-6-phosphate dehydrogenase family. In terms of assembly, homotetramer; dimer of dimers. Interacts with SIRT2; the interaction is enhanced by H(2)O(2) treatment. Forms a ternary complex with ALDOB and TP53; this interaction is direct. ALDOB stabilizes the complex inhibiting G6PD activity and keeping oxidative pentose phosphate metabolism in check. Acetylated by ELP3 at Lys-403; acetylation inhibits its homodimerization and enzyme activity. Deacetylated by SIRT2 at Lys-403; deacetylation stimulates its enzyme activity.

It is found in the cytoplasm. The protein resides in the cytosol. Its subcellular location is the membrane. The catalysed reaction is D-glucose 6-phosphate + NADP(+) = 6-phospho-D-glucono-1,5-lactone + NADPH + H(+). Its pathway is carbohydrate degradation; pentose phosphate pathway; D-ribulose 5-phosphate from D-glucose 6-phosphate (oxidative stage): step 1/3. In terms of biological role, cytosolic glucose-6-phosphate dehydrogenase that catalyzes the first and rate-limiting step of the oxidative branch within the pentose phosphate pathway/shunt, an alternative route to glycolysis for the dissimilation of carbohydrates and a major source of reducing power and metabolic intermediates for fatty acid and nucleic acid biosynthetic processes. The chain is Glucose-6-phosphate 1-dehydrogenase (G6PD) from Osphranter robustus (Wallaroo).